Here is a 351-residue protein sequence, read N- to C-terminus: Histidinol-phosphate aminotransferase (351 aa).

Residues 1 to 26 (MRFRAELEPLSPYNPPRASQEAAAER) form a disordered region. At Lys-223 the chain carries N6-(pyridoxal phosphate)lysine.

It belongs to the class-II pyridoxal-phosphate-dependent aminotransferase family. Histidinol-phosphate aminotransferase subfamily. As to quaternary structure, homodimer. Pyridoxal 5'-phosphate serves as cofactor.

The enzyme catalyses L-histidinol phosphate + 2-oxoglutarate = 3-(imidazol-4-yl)-2-oxopropyl phosphate + L-glutamate. It participates in amino-acid biosynthesis; L-histidine biosynthesis; L-histidine from 5-phospho-alpha-D-ribose 1-diphosphate: step 7/9. The sequence is that of Histidinol-phosphate aminotransferase from Rubrobacter xylanophilus (strain DSM 9941 / JCM 11954 / NBRC 16129 / PRD-1).